A 511-amino-acid polypeptide reads, in one-letter code: MTIILKPGSVPLETLEKIYREGLPVRIDPAFHAGIEKAAARIAEIAAGDAPVYGINTGFGKLASIRIAAGDVATLQRNLILSHCCGVGEPLSENIVRLIMALKLVSLGRGASGVRLEVITLIEAMLEKGVIPMIPEKGSVGASGDLAPLAHMTAAMIGEGEAFYRGERLSGAKALGKAGLKPVVLAAKEGLALINGTQTSTALALAGLFRAHRAVRTALITGALSTDAAMGSDAPFHEEIHQLRGHKGQIDAGRALRTLLEGSAIRRSHLEGDQRVQDPYCIRCQPRVDGACLDILRQAARTLEIEANAVTDNPLVLSDGRAVSGGNFHAEPVAFAADQIALAVCEIGAISQRRIALLVDPSLSFGLPAFLTRKPGLNSGLMIAEVTSAALMSENKQMAHPASVDSTPTSANQEDHVSMACHGARRLLQMTANLNAIIGIEALTGALGVELRKPLTTSAELAKVIAALRAKVVTLEEDRYMADDLKAAAELVADGTLSGVISAGILPDLEA.

Positions 142–144 form a cross-link, 5-imidazolinone (Ala-Gly); the sequence is ASG. S143 bears the 2,3-didehydroalanine (Ser) mark.

It belongs to the PAL/histidase family. In terms of processing, contains an active site 4-methylidene-imidazol-5-one (MIO), which is formed autocatalytically by cyclization and dehydration of residues Ala-Ser-Gly.

Its subcellular location is the cytoplasm. The catalysed reaction is L-histidine = trans-urocanate + NH4(+). It participates in amino-acid degradation; L-histidine degradation into L-glutamate; N-formimidoyl-L-glutamate from L-histidine: step 1/3. This Brucella canis (strain ATCC 23365 / NCTC 10854 / RM-666) protein is Histidine ammonia-lyase.